The sequence spans 248 residues: UDP-2,3-diacylglucosamine hydrolase (248 aa).

Mn(2+) contacts are provided by Asp-7, His-9, Asp-40, Asn-78, and His-113. 78–79 (NR) serves as a coordination point for substrate. Positions 121, 159, 163, 166, and 194 each coordinate substrate. The Mn(2+) site is built by His-194 and His-196.

This sequence belongs to the LpxH family. The cofactor is Mn(2+).

The protein localises to the cell inner membrane. The enzyme catalyses UDP-2-N,3-O-bis[(3R)-3-hydroxytetradecanoyl]-alpha-D-glucosamine + H2O = 2-N,3-O-bis[(3R)-3-hydroxytetradecanoyl]-alpha-D-glucosaminyl 1-phosphate + UMP + 2 H(+). It functions in the pathway glycolipid biosynthesis; lipid IV(A) biosynthesis; lipid IV(A) from (3R)-3-hydroxytetradecanoyl-[acyl-carrier-protein] and UDP-N-acetyl-alpha-D-glucosamine: step 4/6. In terms of biological role, hydrolyzes the pyrophosphate bond of UDP-2,3-diacylglucosamine to yield 2,3-diacylglucosamine 1-phosphate (lipid X) and UMP by catalyzing the attack of water at the alpha-P atom. Involved in the biosynthesis of lipid A, a phosphorylated glycolipid that anchors the lipopolysaccharide to the outer membrane of the cell. The sequence is that of UDP-2,3-diacylglucosamine hydrolase from Pseudomonas fluorescens (strain Pf0-1).